The primary structure comprises 152 residues: MFP1 attachment factor 1 (152 aa).

Disordered regions lie at residues 1–33 (MAEI…PPTQ) and 107–152 (DTVK…ETEP). The WPP stretch occupies residues 12 to 115 (TVTQETQNKP…IDTVKSRSAP (104 aa)). A compositionally biased stretch (polar residues) spans 134-152 (EPSSASGLTGEVSSVETEP).

Interacts with WAP through its WPP domain. Binds to MFP1 and FPP proteins. Expressed in young tomato leaves, young fruits, and flowers (at protein level).

It is found in the nucleus envelope. It localises to the cytoplasm. The protein localises to the golgi apparatus. Its subcellular location is the nucleus. The protein resides in the nucleus matrix. The polypeptide is MFP1 attachment factor 1 (MAF1) (Solanum lycopersicum (Tomato)).